We begin with the raw amino-acid sequence, 1489 residues long: Chromosome partition protein MukB (1489 aa).

Residue 34–41 (GGNGAGKS) participates in ATP binding. 7 coiled-coil regions span residues 326-418 (LEAD…QYNQ), 444-472 (LETFQAKEQEATEKLLSLEQKMSVAQTAH), 509-602 (RHLA…QRAP), 780-805 (RAARENRIESLHAEREGLSERFATLS), 835-919 (EAEI…GNQL), 977-1116 (EMLS…AKAG), and 1209-1266 (VEAI…QNVS). The interval 666–783 (PGGSEDSRLN…TVPIFGRAAR (118 aa)) is flexible hinge.

It belongs to the SMC family. MukB subfamily. In terms of assembly, homodimerization via its hinge domain. Binds to DNA via its C-terminal region. Interacts, and probably forms a ternary complex, with MukE and MukF via its C-terminal region. The complex formation is stimulated by calcium or magnesium. Interacts with tubulin-related protein FtsZ.

It is found in the cytoplasm. Its subcellular location is the nucleoid. Plays a central role in chromosome condensation, segregation and cell cycle progression. Functions as a homodimer, which is essential for chromosome partition. Involved in negative DNA supercoiling in vivo, and by this means organize and compact chromosomes. May achieve or facilitate chromosome segregation by condensation DNA from both sides of a centrally located replisome during cell division. This Citrobacter koseri (strain ATCC BAA-895 / CDC 4225-83 / SGSC4696) protein is Chromosome partition protein MukB.